The chain runs to 505 residues: Cytochrome P450 9b1 (505 aa).

Cys-449 serves as a coordination point for heme.

The protein belongs to the cytochrome P450 family. Requires heme as cofactor.

Its subcellular location is the endoplasmic reticulum membrane. The protein localises to the microsome membrane. May be involved in the metabolism of insect hormones and in the breakdown of synthetic insecticides. The protein is Cytochrome P450 9b1 (Cyp9b1) of Drosophila melanogaster (Fruit fly).